A 178-amino-acid polypeptide reads, in one-letter code: Large ribosomal subunit protein uL6 (178 aa).

Belongs to the universal ribosomal protein uL6 family. In terms of assembly, part of the 50S ribosomal subunit.

Its function is as follows. This protein binds to the 23S rRNA, and is important in its secondary structure. It is located near the subunit interface in the base of the L7/L12 stalk, and near the tRNA binding site of the peptidyltransferase center. The protein is Large ribosomal subunit protein uL6 of Thermoplasma acidophilum (strain ATCC 25905 / DSM 1728 / JCM 9062 / NBRC 15155 / AMRC-C165).